The sequence spans 383 residues: Acetylornithine deacetylase (383 aa).

His-80 serves as a coordination point for Zn(2+). Asp-82 is an active-site residue. Asp-112 serves as a coordination point for Zn(2+). Glu-144 is an active-site residue. The Zn(2+) site is built by Glu-145, Glu-169, and His-355.

It belongs to the peptidase M20A family. ArgE subfamily. In terms of assembly, homodimer. It depends on Zn(2+) as a cofactor. Requires Co(2+) as cofactor. Glutathione is required as a cofactor.

The protein resides in the cytoplasm. The catalysed reaction is N(2)-acetyl-L-ornithine + H2O = L-ornithine + acetate. It participates in amino-acid biosynthesis; L-arginine biosynthesis; L-ornithine from N(2)-acetyl-L-ornithine (linear): step 1/1. In terms of biological role, catalyzes the hydrolysis of the amide bond of N(2)-acetylated L-amino acids. Cleaves the acetyl group from N-acetyl-L-ornithine to form L-ornithine, an intermediate in L-arginine biosynthesis pathway, and a branchpoint in the synthesis of polyamines. This Escherichia coli O8 (strain IAI1) protein is Acetylornithine deacetylase.